Here is a 72-residue protein sequence, read N- to C-terminus: Putative snRNP Sm-like protein (72 aa).

Residues 4–72 (RPLDILNNAL…RGDNVVYVSP (69 aa)) enclose the Sm domain.

It belongs to the snRNP Sm proteins family.

In Methanosarcina barkeri (strain Fusaro / DSM 804), this protein is Putative snRNP Sm-like protein.